The primary structure comprises 1066 residues: Probable sucrose-phosphate synthase 4 (1066 aa).

2 disordered regions span residues 132–166 and 688–714; these read YAAADMSEDLSEGEKGENINESSSTHDESTRGRMP and PRHPRWQKSDDATEVSEADSPGDSLRD. Over residues 143–162 the composition is skewed to basic and acidic residues; it reads EGEKGENINESSSTHDESTR.

Belongs to the glycosyltransferase 1 family. As to quaternary structure, homodimer or homotetramer. Expressed in germinating seeds.

The enzyme catalyses beta-D-fructose 6-phosphate + UDP-alpha-D-glucose = sucrose 6(F)-phosphate + UDP + H(+). Its pathway is glycan biosynthesis; sucrose biosynthesis; sucrose from D-fructose 6-phosphate and UDP-alpha-D-glucose: step 1/2. With respect to regulation, activity is regulated by phosphorylation and moderated by concentration of metabolites and light. In terms of biological role, plays a role in photosynthetic sucrose synthesis by catalyzing the rate-limiting step of sucrose biosynthesis from UDP-glucose and fructose- 6-phosphate. Involved in the regulation of carbon partitioning in the leaves of plants. May regulate the synthesis of sucrose and therefore play a major role as a limiting factor in the export of photoassimilates out of the leaf. Plays a role for sucrose availability that is essential for plant growth and fiber elongation. This chain is Probable sucrose-phosphate synthase 4 (SPS4), found in Oryza sativa subsp. japonica (Rice).